A 365-amino-acid chain; its full sequence is Pyruvate dehydrogenase E1 component subunit beta, mitochondrial (365 aa).

A mitochondrion-targeting transit peptide spans 1–24; it reads MLRTRLIQAASSAQRAFSTSQKAL. Thiamine diphosphate is bound at residue E85. K(+) contacts are provided by I138, A186, I187, and D189.

Requires thiamine diphosphate as cofactor. In terms of tissue distribution, expressed in salivary glands (at protein level).

It localises to the mitochondrion matrix. It catalyses the reaction N(6)-[(R)-lipoyl]-L-lysyl-[protein] + pyruvate + H(+) = N(6)-[(R)-S(8)-acetyldihydrolipoyl]-L-lysyl-[protein] + CO2. The pyruvate dehydrogenase complex catalyzes the overall conversion of pyruvate to acetyl-CoA and CO(2). Might play a role in regulating synapse structure formation at neuromuscular junctions. Might play a role in maintenance of mitochondrial morphology. In Drosophila melanogaster (Fruit fly), this protein is Pyruvate dehydrogenase E1 component subunit beta, mitochondrial.